The following is a 152-amino-acid chain: MVVRKKKKSRKLRGRTRSMGWGRIGQHRKSGARGGFGAVGFHKHKWIWVLKYAPNWYGKHGFTRPPETIYGVYSINVGELDELAKHLVSKNLAYREEGKIVIDVTSMGFNKVLGRGKVTLPLKIITKSISKRAREKITAVGGEVVVIGEKQQ.

The protein belongs to the universal ribosomal protein uL15 family. Part of the 50S ribosomal subunit.

Functionally, binds to the 23S rRNA. The sequence is that of Large ribosomal subunit protein uL15 from Staphylothermus marinus (strain ATCC 43588 / DSM 3639 / JCM 9404 / F1).